The primary structure comprises 271 residues: Glutamate racemase (271 aa).

Residues 10–11 (DS) and 42–43 (YG) each bind substrate. C73 (proton donor/acceptor) is an active-site residue. A substrate-binding site is contributed by 74-75 (NT). C183 serves as the catalytic Proton donor/acceptor. 184-185 (TH) contacts substrate.

This sequence belongs to the aspartate/glutamate racemases family.

It catalyses the reaction L-glutamate = D-glutamate. It participates in cell wall biogenesis; peptidoglycan biosynthesis. Functionally, provides the (R)-glutamate required for cell wall biosynthesis. The chain is Glutamate racemase from Lactococcus lactis subsp. cremoris (strain SK11).